We begin with the raw amino-acid sequence, 329 residues long: Phosphoenolpyruvate transferase (329 aa).

Position 61 (Asp61) interacts with 7,8-didemethyl-8-hydroxy-5-deazariboflavin.

The protein belongs to the CofD family. As to quaternary structure, homodimer. Mg(2+) is required as a cofactor.

The catalysed reaction is enolpyruvoyl-2-diphospho-5'-guanosine + 7,8-didemethyl-8-hydroxy-5-deazariboflavin = dehydro coenzyme F420-0 + GMP + H(+). Its pathway is cofactor biosynthesis; coenzyme F420 biosynthesis. In terms of biological role, catalyzes the transfer of the phosphoenolpyruvate moiety from enoylpyruvoyl-2-diphospho-5'-guanosine (EPPG) to 7,8-didemethyl-8-hydroxy-5-deazariboflavin (FO) with the formation of dehydro coenzyme F420-0 and GMP. This Mycobacterium marinum (strain ATCC BAA-535 / M) protein is Phosphoenolpyruvate transferase.